Consider the following 54-residue polypeptide: Large ribosomal subunit protein bL33 (54 aa).

It belongs to the bacterial ribosomal protein bL33 family.

The polypeptide is Large ribosomal subunit protein bL33 (Buchnera aphidicola subsp. Cinara cedri (strain Cc)).